Here is a 362-residue protein sequence, read N- to C-terminus: Glutamine synthetase (362 aa).

Residues 26–107 (LIAEYIWIDS…VLSECWNADG (82 aa)) form the GS beta-grasp domain. In terms of domain architecture, GS catalytic spans 114 to 362 (HRHEAAKLME…METCFGAVSE (249 aa)).

Belongs to the glutamine synthetase family. Homooctamer.

It localises to the cytoplasm. It catalyses the reaction L-glutamate + NH4(+) + ATP = L-glutamine + ADP + phosphate + H(+). This chain is Glutamine synthetase (gln-1), found in Neurospora crassa (strain ATCC 24698 / 74-OR23-1A / CBS 708.71 / DSM 1257 / FGSC 987).